A 275-amino-acid chain; its full sequence is ATP synthase subunit delta (275 aa).

It belongs to the ATPase delta chain family. In terms of assembly, F-type ATPases have 2 components, F(1) - the catalytic core - and F(0) - the membrane proton channel. F(1) has five subunits: alpha(3), beta(3), gamma(1), delta(1), epsilon(1). F(0) has three main subunits: a(1), b(2) and c(10-14). The alpha and beta chains form an alternating ring which encloses part of the gamma chain. F(1) is attached to F(0) by a central stalk formed by the gamma and epsilon chains, while a peripheral stalk is formed by the delta and b chains.

It localises to the cell membrane. Functionally, f(1)F(0) ATP synthase produces ATP from ADP in the presence of a proton or sodium gradient. F-type ATPases consist of two structural domains, F(1) containing the extramembraneous catalytic core and F(0) containing the membrane proton channel, linked together by a central stalk and a peripheral stalk. During catalysis, ATP synthesis in the catalytic domain of F(1) is coupled via a rotary mechanism of the central stalk subunits to proton translocation. Its function is as follows. This protein is part of the stalk that links CF(0) to CF(1). It either transmits conformational changes from CF(0) to CF(1) or is implicated in proton conduction. This chain is ATP synthase subunit delta, found in Arthrobacter sp. (strain FB24).